A 574-amino-acid polypeptide reads, in one-letter code: Proline--tRNA ligase (574 aa).

The protein belongs to the class-II aminoacyl-tRNA synthetase family. ProS type 1 subfamily. As to quaternary structure, homodimer.

It is found in the cytoplasm. It carries out the reaction tRNA(Pro) + L-proline + ATP = L-prolyl-tRNA(Pro) + AMP + diphosphate. Its function is as follows. Catalyzes the attachment of proline to tRNA(Pro) in a two-step reaction: proline is first activated by ATP to form Pro-AMP and then transferred to the acceptor end of tRNA(Pro). As ProRS can inadvertently accommodate and process non-cognate amino acids such as alanine and cysteine, to avoid such errors it has two additional distinct editing activities against alanine. One activity is designated as 'pretransfer' editing and involves the tRNA(Pro)-independent hydrolysis of activated Ala-AMP. The other activity is designated 'posttransfer' editing and involves deacylation of mischarged Ala-tRNA(Pro). The misacylated Cys-tRNA(Pro) is not edited by ProRS. In Fervidobacterium nodosum (strain ATCC 35602 / DSM 5306 / Rt17-B1), this protein is Proline--tRNA ligase.